The sequence spans 77 residues: Small ribosomal subunit protein uS17 (77 aa).

This sequence belongs to the universal ribosomal protein uS17 family. In terms of assembly, part of the 30S ribosomal subunit.

One of the primary rRNA binding proteins, it binds specifically to the 5'-end of 16S ribosomal RNA. The polypeptide is Small ribosomal subunit protein uS17 (Rickettsia bellii (strain OSU 85-389)).